The following is a 422-amino-acid chain: Putative nickel insertion protein (422 aa).

Belongs to the LarC family.

This Synechocystis sp. (strain ATCC 27184 / PCC 6803 / Kazusa) protein is Putative nickel insertion protein.